Here is a 365-residue protein sequence, read N- to C-terminus: Class I histocompatibility antigen, Gogo-A*0401 alpha chain (365 aa).

A signal peptide spans 1–24; that stretch reads MAVMAPRTLVLLLSGALALTQTWA. Residues 25-114 form an alpha-1 region; it reads GSHSMRYFYT…LRGYYNQSED (90 aa). Topologically, residues 25–308 are extracellular; sequence GSHSMRYFYT…EPSSQPTIPI (284 aa). A glycan (N-linked (GlcNAc...) asparagine) is linked at Asn110. The interval 115-206 is alpha-2; that stretch reads GSHTIQRMYG…ENGKETLQLT (92 aa). Cystine bridges form between Cys125/Cys188 and Cys227/Cys283. Residues 207 to 298 form an alpha-3 region; the sequence is DAPKTHMTHH…GLPKPLTLRW (92 aa). An Ig-like C1-type domain is found at 209-295; the sequence is PKTHMTHHPV…QHEGLPKPLT (87 aa). A connecting peptide region spans residues 299–308; it reads EPSSQPTIPI. A helical transmembrane segment spans residues 309 to 332; the sequence is VGIIAGLVLFGAVIAGAVVAAVRW. The Cytoplasmic portion of the chain corresponds to 333-365; that stretch reads RRKSSDRKGGSYSQAASSDSAQGSDVSLTACKV. Positions 338 to 365 are disordered; sequence DRKGGSYSQAASSDSAQGSDVSLTACKV. Residues 342–359 are compositionally biased toward low complexity; the sequence is GSYSQAASSDSAQGSDVS. The residue at position 343 (Ser343) is a Phosphoserine. Phosphotyrosine is present on Tyr344. Phosphoserine occurs at positions 345, 349, 350, 352, 356, and 359.

Belongs to the MHC class I family. As to quaternary structure, heterodimer of an alpha chain and a beta chain (beta-2-microglobulin).

Its subcellular location is the membrane. Involved in the presentation of foreign antigens to the immune system. This chain is Class I histocompatibility antigen, Gogo-A*0401 alpha chain, found in Gorilla gorilla gorilla (Western lowland gorilla).